A 239-amino-acid chain; its full sequence is Tubulin beta-3 chain (239 aa).

Position 22 (N22) interacts with GTP. Residues E207–A239 are disordered. Acidic residues predominate over residues X230–A239.

The protein belongs to the tubulin family. In terms of assembly, dimer of alpha and beta chains. A typical microtubule is a hollow water-filled tube with an outer diameter of 25 nm and an inner diameter of 15 nM. Alpha-beta heterodimers associate head-to-tail to form protofilaments running lengthwise along the microtubule wall with the beta-tubulin subunit facing the microtubule plus end conferring a structural polarity. Microtubules usually have 13 protofilaments but different protofilament numbers can be found in some organisms and specialized cells. Mg(2+) is required as a cofactor.

The protein localises to the cytoplasm. The protein resides in the cytoskeleton. Functionally, tubulin is the major constituent of microtubules, a cylinder consisting of laterally associated linear protofilaments composed of alpha- and beta-tubulin heterodimers. Microtubules grow by the addition of GTP-tubulin dimers to the microtubule end, where a stabilizing cap forms. Below the cap, tubulin dimers are in GDP-bound state, owing to GTPase activity of alpha-tubulin. This chain is Tubulin beta-3 chain (TUBB3), found in Anemia phyllitidis (Fern).